The following is a 261-amino-acid chain: Glucose 1-dehydrogenase (261 aa).

An NADP(+)-binding site is contributed by 11–35; sequence AITGAASGLGKAMAIRFGKEQAKVV. Ser-145 contacts substrate. The active-site Proton acceptor is Tyr-158.

This sequence belongs to the short-chain dehydrogenases/reductases (SDR) family. As to quaternary structure, homotetramer.

The catalysed reaction is D-glucose + NAD(+) = D-glucono-1,5-lactone + NADH + H(+). It catalyses the reaction D-glucose + NADP(+) = D-glucono-1,5-lactone + NADPH + H(+). In Bacillus subtilis (strain 168), this protein is Glucose 1-dehydrogenase (gdh).